Consider the following 471-residue polypeptide: Cytidine and dCMP deaminase domain-containing protein 1 (471 aa).

A disordered region spans residues 1-27 (MAESNSWRSHRESDGNRSIPNGDDARN). CMP/dCMP-type deaminase domains are found at residues 57–153 (LWME…LLSE) and 312–460 (GVIR…KLNG). Positions 99, 124, 127, and 393 each coordinate Zn(2+). The active-site Proton donor is Glu-395. Positions 421 and 424 each coordinate Zn(2+).

Belongs to the cytidine and deoxycytidylate deaminase family. Zn(2+) serves as cofactor.

The enzyme catalyses 2'-deoxycytidine + H2O + H(+) = 2'-deoxyuridine + NH4(+). The catalysed reaction is cytidine + H2O + H(+) = uridine + NH4(+). In terms of biological role, catalyzes the deamination of cytidine and deoxycytidine into uridine and deoxyuridine, respectively. The chain is Cytidine and dCMP deaminase domain-containing protein 1 (cdadc1) from Danio rerio (Zebrafish).